The chain runs to 205 residues: Tumor suppressor candidate gene 1 protein homolog (205 aa).

A compositionally biased stretch (low complexity) spans 1-12; sequence MWRMRGGATRRG. A disordered region spans residues 1–49; it reads MWRMRGGATRRGSCGGEGGGSRGESGRLGRAREGGGGGGGVGWRGRAGG. The span at 13–23 shows a compositional bias: gly residues; the sequence is SCGGEGGGSRG. A compositionally biased stretch (basic and acidic residues) spans 24-33; it reads ESGRLGRARE. Over residues 34–48 the composition is skewed to gly residues; sequence GGGGGGGVGWRGRAG. The stretch at 66–110 forms a coiled coil; the sequence is LEALRARDERDRQNARLREENARLRLENRRLRRENRSLFRQALRL. 2 disordered regions span residues 113 to 149 and 174 to 205; these read DSGE…SPRA and GARP…RPWL. Ser146 is subject to Phosphoserine. Basic and acidic residues predominate over residues 196-205; sequence HDPDVPRPWL.

The protein is Tumor suppressor candidate gene 1 protein homolog (Tusc1) of Mus musculus (Mouse).